Reading from the N-terminus, the 754-residue chain is 5-methyltetrahydropteroyltriglutamate--homocysteine methyltransferase (754 aa).

5-methyltetrahydropteroyltri-L-glutamate contacts are provided by residues 15 to 18 (RELK) and Lys-114. L-homocysteine-binding positions include 430–432 (IGS) and Glu-483. L-methionine-binding positions include 430-432 (IGS) and Glu-483. 5-methyltetrahydropteroyltri-L-glutamate contacts are provided by residues 514-515 (RC) and Trp-560. Asp-598 contributes to the L-homocysteine binding site. Asp-598 provides a ligand contact to L-methionine. 5-methyltetrahydropteroyltri-L-glutamate is bound at residue Glu-604. The Zn(2+) site is built by His-641, Cys-643, and Glu-665. His-694 functions as the Proton donor in the catalytic mechanism. Cys-726 serves as a coordination point for Zn(2+).

This sequence belongs to the vitamin-B12 independent methionine synthase family. Requires Zn(2+) as cofactor.

It catalyses the reaction 5-methyltetrahydropteroyltri-L-glutamate + L-homocysteine = tetrahydropteroyltri-L-glutamate + L-methionine. It functions in the pathway amino-acid biosynthesis; L-methionine biosynthesis via de novo pathway; L-methionine from L-homocysteine (MetE route): step 1/1. Functionally, catalyzes the transfer of a methyl group from 5-methyltetrahydrofolate to homocysteine resulting in methionine formation. This chain is 5-methyltetrahydropteroyltriglutamate--homocysteine methyltransferase, found in Campylobacter jejuni (strain RM1221).